Consider the following 698-residue polypeptide: Polyribonucleotide nucleotidyltransferase (698 aa).

Residues aspartate 485 and aspartate 491 each contribute to the Mg(2+) site. Positions proline 552–isoleucine 611 constitute a KH domain. The 69-residue stretch at glycine 621 to lysine 689 folds into the S1 motif domain.

The protein belongs to the polyribonucleotide nucleotidyltransferase family. In terms of assembly, component of the RNA degradosome, which is a multiprotein complex involved in RNA processing and mRNA degradation. Requires Mg(2+) as cofactor.

The protein resides in the cytoplasm. The enzyme catalyses RNA(n+1) + phosphate = RNA(n) + a ribonucleoside 5'-diphosphate. Functionally, involved in mRNA degradation. Catalyzes the phosphorolysis of single-stranded polyribonucleotides processively in the 3'- to 5'-direction. This Shewanella frigidimarina (strain NCIMB 400) protein is Polyribonucleotide nucleotidyltransferase.